A 439-amino-acid chain; its full sequence is GTPase Der (439 aa).

2 consecutive EngA-type G domains span residues 4-169 (AMVS…PQEE) and 177-352 (IKIA…EEYN). Residues 10–17 (GRPNVGKS), 57–61 (DTGGL), 120–123 (NKVD), 183–190 (GKPNVGKS), 230–234 (DTAGI), and 295–298 (NKWD) each bind GTP. The KH-like domain maps to 353–437 (KRITTGLLNN…PIVISTKKRG (85 aa)).

It belongs to the TRAFAC class TrmE-Era-EngA-EngB-Septin-like GTPase superfamily. EngA (Der) GTPase family. As to quaternary structure, associates with the 50S ribosomal subunit.

Its function is as follows. GTPase that plays an essential role in the late steps of ribosome biogenesis. The protein is GTPase Der of Thermoanaerobacter sp. (strain X514).